Reading from the N-terminus, the 937-residue chain is Chromatin assembly factor 1 subunit A (937 aa).

The disordered stretch occupies residues 21-69 (RLPFKRLNPVPKEKHDAEAEGKKGKCSKSGLGQSKDSSTDTLHASTDNM). Over residues 31-43 (PKEKHDAEAEGKK) the composition is skewed to basic and acidic residues. Over residues 59–69 (TDTLHASTDNM) the composition is skewed to polar residues. The short motif at 213–226 (FEGKMPVVLLEDIM) is the PxVxL motif element. 5 disordered regions span residues 250 to 386 (SHEG…EKRK), 574 to 614 (VDSD…IPHG), 753 to 778 (GDTS…VPSK), 831 to 851 (SGKE…TPVS), and 910 to 937 (TVTE…SNTV). The span at 255–269 (SVLTNSSLSSLSVSS) shows a compositional bias: low complexity. A compositionally biased stretch (basic and acidic residues) spans 301 to 386 (SSAEKEKLRL…KLRVKEEKRK (86 aa)). 2 stretches are compositionally biased toward acidic residues: residues 574–586 (VDSD…EEPG) and 594–608 (GDDE…DDDG). The segment covering 756–766 (SPVSPNTSRPQ) has biased composition (polar residues).

The protein belongs to the CHAF1A family. As to quaternary structure, subunit of the CAF-1 complex that contains RBBP4, CHAF1B and CHAF1A. Interacts with CHAF1B, PCNA and RBBP4.

It is found in the nucleus. Functionally, acts as a component of the histone chaperone complex chromatin assembly factor 1 (CAF-1), which assembles histone octamers onto DNA during replication and repair. CAF-1 performs the first step of the nucleosome assembly process, bringing newly synthesized histones H3 and H4 to replicating DNA; histones H2A/H2B can bind to this chromatin precursor subsequent to DNA replication to complete the histone octamer. The sequence is that of Chromatin assembly factor 1 subunit A (CHAF1A) from Gallus gallus (Chicken).